We begin with the raw amino-acid sequence, 233 residues long: Gamma-glutamyl-hercynylcysteine sulfoxide hydrolase (233 aa).

Cys2 acts as the Nucleophile in catalysis. Residues 2-233 (CRHLGWLGAQ…TALDRAKGPR (232 aa)) form the Glutamine amidotransferase type-2 domain.

The catalysed reaction is gamma-L-glutamyl-hercynylcysteine S-oxide + H2O = S-(hercyn-2-yl)-L-cysteine S-oxide + L-glutamate. It functions in the pathway amino-acid biosynthesis; ergothioneine biosynthesis. Its function is as follows. Catalyzes the hydrolysis of the gamma-glutamyl amide bond of hercynyl-gamma-L-glutamyl-L-cysteine sulfoxide to produce hercynylcysteine sulfoxide, a step in the biosynthesis pathway of ergothioneine. Ergothioneine is an antioxidant that protects mycobacteria from oxidative stress. This chain is Gamma-glutamyl-hercynylcysteine sulfoxide hydrolase (egtC), found in Mycobacterium tuberculosis (strain ATCC 25618 / H37Rv).